Here is a 194-residue protein sequence, read N- to C-terminus: RNA polymerase II subunit A C-terminal domain phosphatase SSU72 like protein 4 (194 aa).

The protein belongs to the SSU72 phosphatase family.

The protein resides in the nucleus. It carries out the reaction O-phospho-L-seryl-[protein] + H2O = L-seryl-[protein] + phosphate. The catalysed reaction is O-phospho-L-threonyl-[protein] + H2O = L-threonyl-[protein] + phosphate. In terms of biological role, protein phosphatase that catalyzes the dephosphorylation of the C-terminal domain of RNA polymerase II. Plays a role in RNA processing and termination. The protein is RNA polymerase II subunit A C-terminal domain phosphatase SSU72 like protein 4 of Homo sapiens (Human).